Here is a 200-residue protein sequence, read N- to C-terminus: Late embryogenesis abundant protein 19 (200 aa).

Disordered stretches follow at residues 1–158 (MASH…KSTV) and 172–200 (TEDK…ARDH). Composition is skewed to basic and acidic residues over residues 13 to 23 (GETKAHTEEKA), 30 to 42 (SKDK…DRAS), 53 to 81 (QDTK…KDKT), 88 to 97 (ARDKAAESKD), and 105 to 114 (EKTEQAKQKA). The stretch at 52–81 (GQDTKEATKEKAQAAKERASETAQAAKDKT) forms a coiled coil. A compositionally biased stretch (low complexity) spans 115-130 (AETAGAAKQKTAETAQ). Polar residues predominate over residues 145-156 (SVLQQASEQVKS). Positions 172–183 (TEDKAGTDDGAN) are enriched in basic and acidic residues. The span at 186-200 (TSATAAATETTARDH) shows a compositional bias: low complexity.

It belongs to the LEA type 4 family. In terms of tissue distribution, expressed in the shoot apex and leaves.

Functionally, involved in response to drought stress. In Oryza sativa subsp. indica (Rice), this protein is Late embryogenesis abundant protein 19.